The sequence spans 241 residues: Probable cobalt-factor III C(17)-methyltransferase (241 aa).

It belongs to the precorrin methyltransferase family.

The catalysed reaction is Co(II)-factor III + S-adenosyl-L-methionine + H(+) = Co(II)-factor IV + S-adenosyl-L-homocysteine. It participates in cofactor biosynthesis; adenosylcobalamin biosynthesis; cob(II)yrinate a,c-diamide from sirohydrochlorin (anaerobic route): step 3/10. In terms of biological role, methyltransferase that likely catalyzes the ring contraction and methylation of C-17 in cobalt-factor III to form cobalt-factor IV. May also convert cobalt-precorrin-3 to cobalt-precorrin-4. This is Probable cobalt-factor III C(17)-methyltransferase (cbiH) from Salmonella typhimurium (strain LT2 / SGSC1412 / ATCC 700720).